A 385-amino-acid chain; its full sequence is Aliphatic amidase expression-regulating protein (385 aa).

As to quaternary structure, homodimer. Forms a complex with AmiR.

Functionally, negatively regulates the expression of the aliphatic amidase operon. AmiC functions by inhibiting the action of AmiR at the protein level. It exhibits protein kinase activity. This Pseudomonas aeruginosa (strain ATCC 15692 / DSM 22644 / CIP 104116 / JCM 14847 / LMG 12228 / 1C / PRS 101 / PAO1) protein is Aliphatic amidase expression-regulating protein (amiC).